Consider the following 314-residue polypeptide: Mitochondrial 2-oxoglutarate/malate carrier protein (314 aa).

Ala2 bears the N-acetylalanine mark. Position 6 is a phosphoserine (Ser6). Solcar repeat units lie at residues 23 to 108 (VKFL…LFER), 117 to 208 (PGFL…SKQF), and 217 to 306 (DNIL…MNKA). The chain crosses the membrane as a helical span at residues 24 to 42 (KFLFGGLAGMGATVFVQPL). At Lys57 the chain carries N6-succinyllysine. Lys73 carries the N6-acetyllysine modification. The chain crosses the membrane as a helical span at residues 83-101 (GLSAGLLRQATYTTTRLGI). Tyr102 carries the post-translational modification Phosphotyrosine. Transmembrane regions (helical) follow at residues 119–140 (FLLK…GTPA), 183–202 (GCIP…LASY), and 222–240 (HFCA…SMPV). Lys256 carries the post-translational modification N6-acetyllysine. The chain crosses the membrane as a helical span at residues 281 to 300 (GFTPYYARLGPHTVLTFIFL).

The protein belongs to the mitochondrial carrier (TC 2.A.29) family. Interacts with SMIM26.

Its subcellular location is the mitochondrion inner membrane. The enzyme catalyses (S)-malate(in) + 2-oxoglutarate(out) = (S)-malate(out) + 2-oxoglutarate(in). It carries out the reaction malonate(in) + 2-oxoglutarate(out) = malonate(out) + 2-oxoglutarate(in). The catalysed reaction is succinate(in) + 2-oxoglutarate(out) = succinate(out) + 2-oxoglutarate(in). It catalyses the reaction maleate(in) + 2-oxoglutarate(out) = maleate(out) + 2-oxoglutarate(in). The enzyme catalyses oxaloacetate(in) + 2-oxoglutarate(out) = oxaloacetate(out) + 2-oxoglutarate(in). In terms of biological role, catalyzes the transport of 2-oxoglutarate (alpha-oxoglutarate) across the inner mitochondrial membrane in an electroneutral exchange for malate. Can also exchange 2-oxoglutarate for other dicarboxylic acids such as malonate, succinate, maleate and oxaloacetate, although with lower affinity. Contributes to several metabolic processes, including the malate-aspartate shuttle, the oxoglutarate/isocitrate shuttle, in gluconeogenesis from lactate, and in nitrogen metabolism. Maintains mitochondrial fusion and fission events, and the organization and morphology of cristae. Involved in the regulation of apoptosis. Helps protect from cytotoxic-induced apoptosis by modulating glutathione levels in mitochondria. The polypeptide is Mitochondrial 2-oxoglutarate/malate carrier protein (Slc25a11) (Mus musculus (Mouse)).